The sequence spans 445 residues: MGYCPNTPDEIREMLAVIGAGSIEELFAPIPAELRAKSFDLPPGMSEFELMRIMREKAAAGGAEIVPFIGGGIYDHIIPAAVDHLSSRAEFYTAYTPYQPECSQGTLQALFEYQSVICRLTGMEASNASLYDGGTAVAEAALMSLRITERNRVVLDASINPLHREIVTGYLHGLSAEAVEVAPDGCGSDLKRLIDSIDEETAAVIVQNPNFFGSVQDFSELAVKAHEKGALLIISGYPIALGLVASPGEMGADIAVGDGQSLGNPLSFGGPYFGFIATRKRFIRNLPGRIVGETIDNQGRRGYVLTLQAREQHIKRHKATSNICSNQSLCALRGLIFCASLGRKGFEELAVLNYDKAQYAKSRLTGVKGVSVMNAGTTFNEFTLSLPKDAAPVVEKLLACGVAAGVPLVQYYPGMDNALTVTVTEKRSKAEIDRLAALLEEALCS.

Belongs to the GcvP family. N-terminal subunit subfamily. As to quaternary structure, the glycine cleavage system is composed of four proteins: P, T, L and H. In this organism, the P 'protein' is a heterodimer of two subunits.

The enzyme catalyses N(6)-[(R)-lipoyl]-L-lysyl-[glycine-cleavage complex H protein] + glycine + H(+) = N(6)-[(R)-S(8)-aminomethyldihydrolipoyl]-L-lysyl-[glycine-cleavage complex H protein] + CO2. Its function is as follows. The glycine cleavage system catalyzes the degradation of glycine. The P protein binds the alpha-amino group of glycine through its pyridoxal phosphate cofactor; CO(2) is released and the remaining methylamine moiety is then transferred to the lipoamide cofactor of the H protein. The sequence is that of Probable glycine dehydrogenase (decarboxylating) subunit 1 from Citrifermentans bemidjiense (strain ATCC BAA-1014 / DSM 16622 / JCM 12645 / Bem) (Geobacter bemidjiensis).